The chain runs to 298 residues: Bifunctional protein FolD (298 aa).

Residues 166–168 (GRS), serine 191, and isoleucine 232 each bind NADP(+).

Belongs to the tetrahydrofolate dehydrogenase/cyclohydrolase family. In terms of assembly, homodimer.

It carries out the reaction (6R)-5,10-methylene-5,6,7,8-tetrahydrofolate + NADP(+) = (6R)-5,10-methenyltetrahydrofolate + NADPH. The catalysed reaction is (6R)-5,10-methenyltetrahydrofolate + H2O = (6R)-10-formyltetrahydrofolate + H(+). It functions in the pathway one-carbon metabolism; tetrahydrofolate interconversion. Its function is as follows. Catalyzes the oxidation of 5,10-methylenetetrahydrofolate to 5,10-methenyltetrahydrofolate and then the hydrolysis of 5,10-methenyltetrahydrofolate to 10-formyltetrahydrofolate. This chain is Bifunctional protein FolD, found in Maricaulis maris (strain MCS10) (Caulobacter maris).